Reading from the N-terminus, the 516-residue chain is Monocarboxylate transporter 12 (516 aa).

At 1–50 (MPSGSHWTANSSKIITWLLEQPGKEEKRKTMAKVNRARSTSPPDGGWGWM) the chain is on the cytoplasmic side. 12 helical membrane passes run 51 to 73 (IVAG…SIFF), 88 to 108 (AWIH…GSVV), 116 to 136 (VGIM…SFAT), 145 to 165 (LGVL…AMVG), 178 to 198 (IAMS…QLLI), 207 to 227 (LLIL…MRPI), 283 to 303 (FVVL…LFVY), 319 to 339 (AFLM…FGWL), 350 to 370 (YVCY…LPML), 377 to 397 (VPFS…IPVV), 410 to 430 (ALGV…PIAG), and 440 to 460 (TAAF…LGFA). Topologically, residues 461–516 (RLIKRMRKTQLQFIAKESDPKLQLWTNGSVAYSVARELDQKHGEPVATAVPGYSLT) are cytoplasmic.

Belongs to the major facilitator superfamily. Monocarboxylate porter (TC 2.A.1.13) family. Interacts with isoform 2 of BSG; this interaction is required for its localization to the plasma membrane. In terms of tissue distribution, most highly expressed in kidney, followed by retina, lung, heart and testis. Very weakly expressed in brain and liver. Also detected in lens.

Its subcellular location is the cell membrane. The protein localises to the basolateral cell membrane. It catalyses the reaction creatine(in) = creatine(out). It carries out the reaction guanidinoacetate(in) = guanidinoacetate(out). Its activity is regulated as follows. Creatine uptake is inhibited by carbonyl cyanide 3-chlorophenylhydrazone (CCCP) and by valinomycin. Its function is as follows. Functions as a transporter for creatine and as well for its precursor guanidinoacetate. Transport of creatine and GAA is independent of resting membrane potential and extracellular Na(+), Cl(-), or pH. Contributes to the process of creatine biosynthesis and distribution. The polypeptide is Monocarboxylate transporter 12 (Homo sapiens (Human)).